A 253-amino-acid chain; its full sequence is Chitooligosaccharide deacetylase (253 aa).

The Mg(2+) site is built by His61 and His125.

The protein belongs to the YdjC deacetylase family. ChbG subfamily. As to quaternary structure, homodimer. Requires Mg(2+) as cofactor.

The protein localises to the cytoplasm. It carries out the reaction N,N'-diacetylchitobiose + H2O = N-acetyl-beta-D-glucosaminyl-(1-&gt;4)-D-glucosamine + acetate. It catalyses the reaction diacetylchitobiose-6'-phosphate + H2O = N'-monoacetylchitobiose-6'-phosphate + acetate. It functions in the pathway glycan degradation; chitin degradation. Functionally, involved in the degradation of chitin. ChbG is essential for growth on the acetylated chitooligosaccharides chitobiose and chitotriose but is dispensable for growth on cellobiose and chitosan dimer, the deacetylated form of chitobiose. Deacetylation of chitobiose-6-P and chitotriose-6-P is necessary for both the activation of the chb promoter by the regulatory protein ChbR and the hydrolysis of phosphorylated beta-glucosides by the phospho-beta-glucosidase ChbF. Catalyzes the removal of only one acetyl group from chitobiose-6-P to yield monoacetylchitobiose-6-P, the inducer of ChbR and the substrate of ChbF. This Proteus mirabilis (strain HI4320) protein is Chitooligosaccharide deacetylase.